We begin with the raw amino-acid sequence, 336 residues long: Flavonoid 4'-O-methyltransferase 5 (336 aa).

The S-adenosyl-L-methionine site is built by Tyr-140 and Asp-203. His-241 functions as the Proton acceptor in the catalytic mechanism.

This sequence belongs to the class I-like SAM-binding methyltransferase superfamily. Cation-independent O-methyltransferase family. As to quaternary structure, homodimer. As to expression, expressed in leaves.

The enzyme catalyses genkwanin + S-adenosyl-L-methionine = apigenin 4',7-dimethyl ether + S-adenosyl-L-homocysteine. The catalysed reaction is cirsiliol + S-adenosyl-L-methionine = eupatorin + S-adenosyl-L-homocysteine + H(+). It carries out the reaction cirsimaritin + S-adenosyl-L-methionine = salvigenin + S-adenosyl-L-homocysteine + H(+). It catalyses the reaction scutellarein 7-methyl ether + S-adenosyl-L-methionine = ladanein + S-adenosyl-L-homocysteine + H(+). The enzyme catalyses (2S)-sakuranetin + S-adenosyl-L-methionine = (2S)-naringenin 4',7-dimethyl ether + S-adenosyl-L-homocysteine + H(+). The protein operates within flavonoid metabolism. With respect to regulation, substrate inhibition by genkwanin (GENK) at concentrations above 10 mM. Functionally, flavonoid 4'-O-methyltransferase involved in the biosynthesis of polymethoxylated flavonoids natural products such as nevadensin and salvigenin, aroma compounds which contribute to the flavor of sweet basil, and exhibit pharmacological activities such as anti-allergic, anti-oxidant, antibacterial, anti-proliferative, and anti-inflammatory effects. Catalyzes S-adenosylmethionine-dependent regioselective 4'-O-methylation of flavonoids; active on various hydroxylated flavonoid substrates, including scutellarein-7-methyl ether (SCU7Me) and, with a lower efficiency, cirsimaritin (CIRM), sakuranetin (NAR7Me), ladanein (LAD) and genkwanin (GENK). This is Flavonoid 4'-O-methyltransferase 5 from Ocimum basilicum (Sweet basil).